The primary structure comprises 71 residues: Beta-defensin 25 (71 aa).

An N-terminal signal peptide occupies residues 1–22 (MAKWILLIVALLVLGHVPSGST). 3 disulfide bridges follow: Cys27–Cys54, Cys34–Cys48, and Cys38–Cys55.

The protein belongs to the beta-defensin family.

It localises to the secreted. Has antibacterial activity. This chain is Beta-defensin 25 (Defb25), found in Rattus norvegicus (Rat).